The following is a 151-amino-acid chain: Large ribosomal subunit protein bL9 (151 aa).

The protein belongs to the bacterial ribosomal protein bL9 family.

In terms of biological role, binds to the 23S rRNA. This is Large ribosomal subunit protein bL9 from Mycobacteroides abscessus (strain ATCC 19977 / DSM 44196 / CCUG 20993 / CIP 104536 / JCM 13569 / NCTC 13031 / TMC 1543 / L948) (Mycobacterium abscessus).